A 108-amino-acid chain; its full sequence is MKKMMTFLKKAKVKAFTLVEMLVVLLIISVLFLLFVPNLTKQKEAVNDKGKAAVVKVVESQAELYSLEKNEDASLRKLQADGRITEEQAKAYKEYHDKNGGANRKVND.

Positions 1–13 are cleaved as a signal peptide; sequence MKKMMTFLKKAKV. The segment at 14–39 is may be involved in polymerization of ComGC; that stretch reads KAFTLVEMLVVLLIISVLFLLFVPNL. N-methylphenylalanine is present on F16. Residues 16 to 36 form a helical membrane-spanning segment; the sequence is FTLVEMLVVLLIISVLFLLFV.

Belongs to the ComGC family. As to quaternary structure, the transformation pili are flexible filaments, consisting mainly of the major pilin ComGC and smaller amounts of the minor pilins, including at least ComGD, ComGF and ComGG, and perhaps ComGE. Homodimer. Forms higher-order multimers. Interacts with ComGG; the interaction is probably direct. Undergoes proteolytic cleavage.

Its subcellular location is the cell membrane. It is found in the cell surface. It localises to the fimbrium. The protein localises to the secreted. Functionally, major component of the type IV-like pilus (T4P) that plays a role in transformation. Transformation pili are dynamically extended and retracted, perhaps thereby promoting DNA uptake and transformation. Required for transformation. Required for DNA binding. This Streptococcus pneumoniae (strain ATCC BAA-255 / R6) protein is Competence protein ComGC.